We begin with the raw amino-acid sequence, 415 residues long: Carbamoyl phosphate synthase arginine-specific small chain (415 aa).

The transit peptide at 1-17 directs the protein to the mitochondrion; the sequence is MLRFLKPFPLRFGKRFY. Residues Ser-88, Gly-272, and Gly-274 each coordinate L-glutamine. Residues 225–412 enclose the Glutamine amidotransferase type-1 domain; it reads NIAVIDCGVK…IKEAIKYQKS (188 aa). Catalysis depends on Cys-301, which acts as the Nucleophile. Positions 302, 305, 343, 345, and 346 each coordinate L-glutamine. Residues His-385 and Glu-387 contribute to the active site.

The protein belongs to the CarA family. In terms of assembly, heterodimer composed of 2 chains; the small (or glutamine) chain promotes the hydrolysis of glutamine to ammonia, which is used by the large (or ammonia) chain to synthesize carbamoyl phosphate.

It localises to the mitochondrion. It is found in the cytoplasm. The enzyme catalyses hydrogencarbonate + L-glutamine + 2 ATP + H2O = carbamoyl phosphate + L-glutamate + 2 ADP + phosphate + 2 H(+). It catalyses the reaction L-glutamine + H2O = L-glutamate + NH4(+). Its pathway is amino-acid biosynthesis; L-arginine biosynthesis; carbamoyl phosphate from bicarbonate: step 1/1. In terms of biological role, small subunit of the arginine-specific carbamoyl phosphate synthase (CPSase). CPSase catalyzes the formation of carbamoyl phosphate from the ammonia moiety of glutamine, carbonate, and phosphate donated by ATP, the first step of the arginine biosynthetic pathway. The small subunit (glutamine amidotransferase) binds and cleaves glutamine to supply the large subunit with the substrate ammonia. The polypeptide is Carbamoyl phosphate synthase arginine-specific small chain (arg5) (Schizosaccharomyces pombe (strain 972 / ATCC 24843) (Fission yeast)).